A 216-amino-acid chain; its full sequence is Cytidylate kinase (216 aa).

An ATP-binding site is contributed by G7–T15.

Belongs to the cytidylate kinase family. Type 1 subfamily.

It localises to the cytoplasm. The catalysed reaction is CMP + ATP = CDP + ADP. It catalyses the reaction dCMP + ATP = dCDP + ADP. The sequence is that of Cytidylate kinase from Chlamydia trachomatis serovar A (strain ATCC VR-571B / DSM 19440 / HAR-13).